Consider the following 304-residue polypeptide: N-acetylmuramic acid 6-phosphate etherase 1 (304 aa).

Over residues Met-1 to Thr-10 the composition is skewed to polar residues. Residues Met-1 to Arg-20 are disordered. An SIS domain is found at Ala-58 to Lys-221. Residue Glu-86 is the Proton donor of the active site. The active site involves Glu-117.

This sequence belongs to the GCKR-like family. MurNAc-6-P etherase subfamily. Homodimer.

The catalysed reaction is N-acetyl-D-muramate 6-phosphate + H2O = N-acetyl-D-glucosamine 6-phosphate + (R)-lactate. It functions in the pathway amino-sugar metabolism; N-acetylmuramate degradation. In terms of biological role, specifically catalyzes the cleavage of the D-lactyl ether substituent of MurNAc 6-phosphate, producing GlcNAc 6-phosphate and D-lactate. The protein is N-acetylmuramic acid 6-phosphate etherase 1 of Bacillus licheniformis (strain ATCC 14580 / DSM 13 / JCM 2505 / CCUG 7422 / NBRC 12200 / NCIMB 9375 / NCTC 10341 / NRRL NRS-1264 / Gibson 46).